The chain runs to 227 residues: Nucleoside triphosphate pyrophosphatase (227 aa).

Aspartate 77 serves as the catalytic Proton acceptor.

This sequence belongs to the Maf family. Requires a divalent metal cation as cofactor.

It is found in the cytoplasm. The catalysed reaction is a ribonucleoside 5'-triphosphate + H2O = a ribonucleoside 5'-phosphate + diphosphate + H(+). It catalyses the reaction a 2'-deoxyribonucleoside 5'-triphosphate + H2O = a 2'-deoxyribonucleoside 5'-phosphate + diphosphate + H(+). Nucleoside triphosphate pyrophosphatase. May have a dual role in cell division arrest and in preventing the incorporation of modified nucleotides into cellular nucleic acids. The sequence is that of Nucleoside triphosphate pyrophosphatase from Rickettsia typhi (strain ATCC VR-144 / Wilmington).